The primary structure comprises 339 residues: Glucokinase (339 aa).

Position 16–21 (Gly-16–Thr-21) interacts with ATP.

Belongs to the bacterial glucokinase family.

It is found in the cytoplasm. It catalyses the reaction D-glucose + ATP = D-glucose 6-phosphate + ADP + H(+). This Sinorhizobium fredii (strain NBRC 101917 / NGR234) protein is Glucokinase.